A 183-amino-acid polypeptide reads, in one-letter code: Large ribosomal subunit protein uL5 (183 aa).

Belongs to the universal ribosomal protein uL5 family. In terms of assembly, part of the 50S ribosomal subunit; part of the 5S rRNA/L5/L18/L25 subcomplex. Contacts the 5S rRNA and the P site tRNA. Forms a bridge to the 30S subunit in the 70S ribosome.

Its function is as follows. This is one of the proteins that bind and probably mediate the attachment of the 5S RNA into the large ribosomal subunit, where it forms part of the central protuberance. In the 70S ribosome it contacts protein S13 of the 30S subunit (bridge B1b), connecting the 2 subunits; this bridge is implicated in subunit movement. Contacts the P site tRNA; the 5S rRNA and some of its associated proteins might help stabilize positioning of ribosome-bound tRNAs. In Tropheryma whipplei (strain TW08/27) (Whipple's bacillus), this protein is Large ribosomal subunit protein uL5.